We begin with the raw amino-acid sequence, 269 residues long: D-aminoacyl-tRNA deacylase (269 aa).

It belongs to the DtdA deacylase family. As to quaternary structure, monomer. Requires Zn(2+) as cofactor.

It carries out the reaction a D-aminoacyl-tRNA + H2O = a tRNA + a D-alpha-amino acid + H(+). The catalysed reaction is glycyl-tRNA(Ala) + H2O = tRNA(Ala) + glycine + H(+). Its function is as follows. D-aminoacyl-tRNA deacylase with broad substrate specificity. By recycling D-aminoacyl-tRNA to D-amino acids and free tRNA molecules, this enzyme counteracts the toxicity associated with the formation of D-aminoacyl-tRNA entities in vivo. This Caldivirga maquilingensis (strain ATCC 700844 / DSM 13496 / JCM 10307 / IC-167) protein is D-aminoacyl-tRNA deacylase.